We begin with the raw amino-acid sequence, 106 residues long: MVNIPKTRNTYCKGKGCRKHTIHKVTQYKAGRASLFAQGKRRYDRKQSGYGGQTKQVFHKKAKTTKKIVLKLECTVCKTKKQLPLKRCKHIELGGEKKQKGQALQF.

It belongs to the eukaryotic ribosomal protein eL42 family.

This chain is Large ribosomal subunit protein eL42 (RPL44), found in Candida tropicalis (Yeast).